The sequence spans 79 residues: Neurotoxin 3FTx-LI (79 aa).

The N-terminal stretch at 1–21 (MKTLLLTLVVVTIVCLDLGYT) is a signal peptide. Disulfide bonds link C24/C43, C36/C61, C65/C71, and C72/C77.

In terms of tissue distribution, expressed by the venom gland.

The protein resides in the secreted. Blocks both the muscle-twitch response to nerve stimulation and the response to exogenous acetylcholine. The chain is Neurotoxin 3FTx-LI from Bungarus fasciatus (Banded krait).